The primary structure comprises 267 residues: NAD(P)H-hydrate epimerase (267 aa).

The 216-residue stretch at 27–242 folds into the YjeF N-terminal domain; sequence AQKIDEDLMS…DLEAKFDLQL (216 aa). 78–82 serves as a coordination point for (6S)-NADPHX; sequence NQGGD. K(+) contacts are provided by Gln79 and Asp142. (6S)-NADPHX-binding positions include 146-152 and Asp185; that span reads GFNFKGD. Ser188 is a K(+) binding site.

Belongs to the NnrE/AIBP family. K(+) is required as a cofactor.

It localises to the cytoplasm. The protein resides in the mitochondrion. The enzyme catalyses (6R)-NADHX = (6S)-NADHX. It catalyses the reaction (6R)-NADPHX = (6S)-NADPHX. In terms of biological role, catalyzes the epimerization of the S- and R-forms of NAD(P)HX, a damaged form of NAD(P)H that is a result of enzymatic or heat-dependent hydration. This is a prerequisite for the S-specific NAD(P)H-hydrate dehydratase to allow the repair of both epimers of NAD(P)HX. The protein is NAD(P)H-hydrate epimerase of Mycosarcoma maydis (Corn smut fungus).